Here is a 109-residue protein sequence, read N- to C-terminus: Homeobox protein E30 (109 aa).

Residues 1–12 (GPRTRRVKRSHN) show a composition bias toward basic residues. The segment at 1-27 (GPRTRRVKRSHNGKNGSPEEKRPRTAF) is disordered. The segment at residues 20 to 79 (EKRPRTAFSAEQLARLKREFAENRYLTERRRQQLSRDLGLTEAQIKIWFQNKRAKIKKAS) is a DNA-binding region (homeobox).

The protein belongs to the engrailed homeobox family.

The protein localises to the nucleus. The polypeptide is Homeobox protein E30 (Apis mellifera (Honeybee)).